A 449-amino-acid polypeptide reads, in one-letter code: uncharacterized protein (449 aa).

13 consecutive transmembrane segments (helical) span residues 1–21 (MVAN…ILLI), 26–46 (IHLT…HVIT), 51–71 (IDYI…MVLV), 97–117 (LLML…PNAT), 137–157 (FVPI…LTLV), 178–198 (FKLS…TPFL), 223–243 (VLMA…IGES), 244–264 (LPVP…ALLL), 285–305 (LIFF…GVTA), 310–330 (LLAV…VFTV), 340–360 (IPLV…IGFA), 377–397 (VLPL…GTLV), and 425–445 (GLPV…WLMF).

Belongs to the CitM (TC 2.A.11) transporter family.

The protein resides in the cell membrane. This is an uncharacterized protein from Synechocystis sp. (strain ATCC 27184 / PCC 6803 / Kazusa).